The chain runs to 525 residues: Rho guanine nucleotide exchange factor gef3 (525 aa).

Residues 72 to 268 (AIISVLEEFR…EIASQRMNEL (197 aa)) enclose the DH domain.

Its subcellular location is the cytoplasm. Functionally, has a role in the control of cell polarity and cytokinesis. Involved in bipolar growth and septum formation. The sequence is that of Rho guanine nucleotide exchange factor gef3 (gef3) from Schizosaccharomyces pombe (strain 972 / ATCC 24843) (Fission yeast).